Here is a 54-residue protein sequence, read N- to C-terminus: Conotoxin mr5.4b (54 aa).

A signal peptide spans 1–14 (ILLLLIASAPSVDA). Residues 15-40 (QLKTKDDVPLASFHANVKRTLQKLLN) constitute a propeptide that is removed on maturation. Position 52 is a 4-carboxyglutamate (Glu-52).

It belongs to the conotoxin T superfamily. In terms of processing, contains 2 disulfide bonds that can be either 'C1-C3, C2-C4' or 'C1-C4, C2-C3', since these disulfide connectivities have been observed for conotoxins with cysteine framework V (for examples, see AC P0DQQ7 and AC P81755). Expressed by the venom duct.

Its subcellular location is the secreted. The chain is Conotoxin mr5.4b from Conus marmoreus (Marble cone).